The following is a 507-amino-acid chain: Dihydrolipoyllysine-residue acetyltransferase component of pyruvate dehydrogenase complex, mitochondrial (507 aa).

The Lipoyl-binding domain maps to 77–153 (HNRVALPALS…PIGKLLCIIV (77 aa)). The residue at position 118 (Lys118) is an N6-lipoyllysine. Disordered stretches follow at residues 168–223 (DGAS…VSAS) and 248–270 (RILA…TQAV). The region spanning 221–258 (SASPFAKKLAAENGLDLSGVSGSGPGGRILASDLSQAP) is the Peripheral subunit-binding (PSBD) domain. Residues His480 and Asp484 contribute to the active site.

It belongs to the 2-oxoacid dehydrogenase family. It depends on (R)-lipoate as a cofactor.

Its subcellular location is the mitochondrion matrix. It catalyses the reaction N(6)-[(R)-dihydrolipoyl]-L-lysyl-[protein] + acetyl-CoA = N(6)-[(R)-S(8)-acetyldihydrolipoyl]-L-lysyl-[protein] + CoA. The pyruvate dehydrogenase complex catalyzes the overall conversion of pyruvate to acetyl-CoA and CO(2). It contains multiple copies of three enzymatic components: pyruvate dehydrogenase (E1), dihydrolipoamide acetyltransferase (E2) and lipoamide dehydrogenase (E3). This Caenorhabditis elegans protein is Dihydrolipoyllysine-residue acetyltransferase component of pyruvate dehydrogenase complex, mitochondrial.